A 103-amino-acid chain; its full sequence is Large ribosomal subunit protein bL21 (103 aa).

Belongs to the bacterial ribosomal protein bL21 family. In terms of assembly, part of the 50S ribosomal subunit. Contacts protein L20.

Functionally, this protein binds to 23S rRNA in the presence of protein L20. This is Large ribosomal subunit protein bL21 from Alteromonas mediterranea (strain DSM 17117 / CIP 110805 / LMG 28347 / Deep ecotype).